We begin with the raw amino-acid sequence, 31 residues long: Electron transfer flavoprotein-ubiquinone oxidoreductase (31 aa).

11-25 (VVIVGAGGAGLSAAI) serves as a coordination point for FAD.

In terms of assembly, monomer. Requires [4Fe-4S] cluster as cofactor. FAD serves as cofactor.

The enzyme catalyses a ubiquinone + reduced [electron-transfer flavoprotein] = a ubiquinol + oxidized [electron-transfer flavoprotein] + H(+). Accepts electrons from ETF and reduces ubiquinone. This chain is Electron transfer flavoprotein-ubiquinone oxidoreductase, found in Paracoccus denitrificans.